We begin with the raw amino-acid sequence, 271 residues long: Zinc-finger homeodomain protein 8 (271 aa).

A Phosphoserine modification is found at S16. The segment at 56–107 adopts a ZF-HD dimerization-type; degenerate zinc-finger fold; it reads YKECLKNHAAGIGGHALDGCGEFMPSPSFNSNDPASLTCAACGCHRNFHRRE. The interval 125-154 is disordered; it reads HNRHQLPPPPPPHLAGIRSPDDDDSASPPP. A DNA-binding region (homeobox) is located at residues 179–242; the sequence is RKRFRTKFSQ…NNKISGRSGA (64 aa).

In terms of assembly, homo- and heterodimer with other ZFHD proteins. Interacts with MIF1, MIF2 and MIF3; these interactions prevent nuclear localization and DNA-binding to inhibit transcription regulation activity. Binds to ZHD1, ZHD2, ZHD4, ZHD10 and ZHD11. Interacts with HIPP30. In terms of tissue distribution, mostly expressed in flowers and inflorescence.

It localises to the nucleus. Putative transcription factor. In Arabidopsis thaliana (Mouse-ear cress), this protein is Zinc-finger homeodomain protein 8 (ZHD8).